The primary structure comprises 926 residues: MLEDEYQLDFFKNNGFVRKQCQKCGTFFWTRDPERNTCGDAPCDPYSFIGSPVFSREFNISEMREYYLSFFEARGHTRINRYPVVARWRDDIYLTIASIADFQPFVTSGQVPPPANPLTISQPCIRLNDLDSVGRSGRHLTNFEMMAHHAFNRRDNEIYWKEHTLELCDELLNSLKVNPLAVTYKEEPWAGGGNAGPCVEVIVHGLELATLVFMDLKTDKKGDIEIKGETYSKMDNYIVDTGYGLERFVWASRGSPTIYDALFPGIVNELMGLAGIEHELNDSEYANILAQNARLAGFMDVSEKANLMELRKKVASSIGMTVDKLSAIMEPVEKVYAITDHTRCLTFMLGDGIIPSNVKAGYLARLVLRRTLRMMKDLDIRIPLSEIVDMHIKNMPEYPGFRENFPVIQDILESEEEKFNTTMERGRRIIQKSASHFKKTGEKIPLSQLTELYDSHGIPPEMAKEVAAEIGVGVEFPDNFYSIIGELHNKAEEKEEEVNPYAERLKHLPKTKRRFYDEPTRLEFEAVVLDVFDNHVVLDNTFFYAEGGGQPADIGTIVAEDTVYRVVDVQVYEGVILHTIENPGKELAITKGELITGKVDEKRRMTLARHHTATHIVNDAARKVLGKHIWQAGAQKFEDHSRLDLSHYKHISPEEIRQIELLANRTVMENKRVVTEWMPRTEAEQVYGFGLYQGGVPPGEKIRIVKVGDDVEACGGTHCTSTGIIGPIKILKTERIQDGVERIEFAAGTAAVRAMQKLESLLVDSSKTLSVPPEHLPVSVDRFFGEWKDLKKENERLKEELARSRVYRMLGDASEVSGLKVITEQVSGADSLELQKIATELLKTENVVALLASDFEGVKIVASAGEKAMKCGVNAGNLVREMSKIVGGGGGGKPALAMGGGTDPTRIQDALTRGLELVKTAACKEA.

The Zn(2+) site is built by H611, H615, C714, and H718.

It belongs to the class-II aminoacyl-tRNA synthetase family. Zn(2+) is required as a cofactor.

Its subcellular location is the cytoplasm. It catalyses the reaction tRNA(Ala) + L-alanine + ATP = L-alanyl-tRNA(Ala) + AMP + diphosphate. In terms of biological role, catalyzes the attachment of alanine to tRNA(Ala) in a two-step reaction: alanine is first activated by ATP to form Ala-AMP and then transferred to the acceptor end of tRNA(Ala). Also edits incorrectly charged Ser-tRNA(Ala) and Gly-tRNA(Ala) via its editing domain. This is Alanine--tRNA ligase from Methanosarcina mazei (strain ATCC BAA-159 / DSM 3647 / Goe1 / Go1 / JCM 11833 / OCM 88) (Methanosarcina frisia).